The primary structure comprises 121 residues: uncharacterized protein (121 aa).

2 helical membrane passes run 26–46 (FIAL…ILVL) and 72–92 (AFLT…WLGL).

The protein resides in the membrane. This is an uncharacterized protein from Saccharomyces cerevisiae (strain ATCC 204508 / S288c) (Baker's yeast).